Consider the following 101-residue polypeptide: uncharacterized protein (101 aa).

Residues 17–37 (VIKILLISGISRIIILILAMF) traverse the membrane as a helical segment.

The protein resides in the endoplasmic reticulum membrane. This is an uncharacterized protein from Schizosaccharomyces pombe (strain 972 / ATCC 24843) (Fission yeast).